A 480-amino-acid chain; its full sequence is Protein nucleotidyltransferase YdiU (480 aa).

ATP is bound by residues G86, G88, R89, K109, D121, G122, R172, and R179. The active-site Proton acceptor is D248. The Mg(2+) site is built by N249 and D258. D258 lines the ATP pocket.

It belongs to the SELO family. The cofactor is Mg(2+). Mn(2+) is required as a cofactor.

The enzyme catalyses L-seryl-[protein] + ATP = 3-O-(5'-adenylyl)-L-seryl-[protein] + diphosphate. The catalysed reaction is L-threonyl-[protein] + ATP = 3-O-(5'-adenylyl)-L-threonyl-[protein] + diphosphate. It catalyses the reaction L-tyrosyl-[protein] + ATP = O-(5'-adenylyl)-L-tyrosyl-[protein] + diphosphate. It carries out the reaction L-histidyl-[protein] + UTP = N(tele)-(5'-uridylyl)-L-histidyl-[protein] + diphosphate. The enzyme catalyses L-seryl-[protein] + UTP = O-(5'-uridylyl)-L-seryl-[protein] + diphosphate. The catalysed reaction is L-tyrosyl-[protein] + UTP = O-(5'-uridylyl)-L-tyrosyl-[protein] + diphosphate. Its function is as follows. Nucleotidyltransferase involved in the post-translational modification of proteins. It can catalyze the addition of adenosine monophosphate (AMP) or uridine monophosphate (UMP) to a protein, resulting in modifications known as AMPylation and UMPylation. The polypeptide is Protein nucleotidyltransferase YdiU (Klebsiella pneumoniae subsp. pneumoniae (strain ATCC 700721 / MGH 78578)).